The chain runs to 288 residues: 4-hydroxybenzoate octaprenyltransferase (288 aa).

8 helical membrane-spanning segments follow: residues 23–43, 46–66, 98–118, 141–161, 165–185, 213–233, 234–254, and 268–288; these read IGSL…GKGI, TKIL…GCVV, ILFV…NSMT, LPQV…FAAV, LPLV…AYDT, LIIG…GWLM, NLGG…VHQQ, and AFLN…ISYL.

Belongs to the UbiA prenyltransferase family. It depends on Mg(2+) as a cofactor.

The protein resides in the cell inner membrane. It catalyses the reaction all-trans-octaprenyl diphosphate + 4-hydroxybenzoate = 4-hydroxy-3-(all-trans-octaprenyl)benzoate + diphosphate. The protein operates within cofactor biosynthesis; ubiquinone biosynthesis. Its function is as follows. Catalyzes the prenylation of para-hydroxybenzoate (PHB) with an all-trans polyprenyl group. Mediates the second step in the final reaction sequence of ubiquinone-8 (UQ-8) biosynthesis, which is the condensation of the polyisoprenoid side chain with PHB, generating the first membrane-bound Q intermediate 3-octaprenyl-4-hydroxybenzoate. This Yersinia enterocolitica serotype O:8 / biotype 1B (strain NCTC 13174 / 8081) protein is 4-hydroxybenzoate octaprenyltransferase.